We begin with the raw amino-acid sequence, 207 residues long: Urease accessory protein UreG (207 aa).

GTP is bound at residue 13 to 20 (GPVGSGKT).

This sequence belongs to the SIMIBI class G3E GTPase family. UreG subfamily. As to quaternary structure, homodimer. UreD, UreF and UreG form a complex that acts as a GTP-hydrolysis-dependent molecular chaperone, activating the urease apoprotein by helping to assemble the nickel containing metallocenter of UreC. The UreE protein probably delivers the nickel.

The protein resides in the cytoplasm. Facilitates the functional incorporation of the urease nickel metallocenter. This process requires GTP hydrolysis, probably effectuated by UreG. This is Urease accessory protein UreG from Azoarcus sp. (strain BH72).